Consider the following 552-residue polypeptide: Probable malate:quinone oxidoreductase (552 aa).

Positions 530–552 (DAKPATPEAKPAQASSPQHDMAL) are disordered. A compositionally biased stretch (polar residues) spans 542-552 (QASSPQHDMAL).

This sequence belongs to the MQO family. The cofactor is FAD.

The enzyme catalyses (S)-malate + a quinone = a quinol + oxaloacetate. It participates in carbohydrate metabolism; tricarboxylic acid cycle; oxaloacetate from (S)-malate (quinone route): step 1/1. The sequence is that of Probable malate:quinone oxidoreductase from Cronobacter sakazakii (strain ATCC BAA-894) (Enterobacter sakazakii).